The chain runs to 101 residues: Non-structural protein NS-S (101 aa).

The protein belongs to the orthobunyavirus NS-S protein family.

This Equus caballus (Horse) protein is Non-structural protein NS-S (N).